A 192-amino-acid chain; its full sequence is uncharacterized protein (192 aa).

The region spanning 29 to 160 (HRQAAVLIPI…PLDIYRRGDS (132 aa)) is the Nudix hydrolase domain. The Nudix box motif lies at 67-89 (GAVDDTDASVIAAALREAEEEVA). Residues E83 and E87 each coordinate Mg(2+).

Belongs to the Nudix hydrolase family. PCD1 subfamily. Requires Mn(2+) as cofactor. It depends on Mg(2+) as a cofactor.

In terms of biological role, probably mediates the hydrolysis of some nucleoside diphosphate derivatives. This is an uncharacterized protein from Escherichia coli (strain SMS-3-5 / SECEC).